A 95-amino-acid chain; its full sequence is MSFKPLHDRIAIKPIEQEEKTKGGIIIPDTVKEKPMQGEIVAVGNGIRNEKGEIHPLELKVGDKVLYGKWAGTEIEIKGTKLIVMKESDVFGIIN.

It belongs to the GroES chaperonin family. As to quaternary structure, heptamer of 7 subunits arranged in a ring. Interacts with the chaperonin GroEL.

Its subcellular location is the cytoplasm. Its function is as follows. Together with the chaperonin GroEL, plays an essential role in assisting protein folding. The GroEL-GroES system forms a nano-cage that allows encapsulation of the non-native substrate proteins and provides a physical environment optimized to promote and accelerate protein folding. GroES binds to the apical surface of the GroEL ring, thereby capping the opening of the GroEL channel. This Rickettsia conorii (strain ATCC VR-613 / Malish 7) protein is Co-chaperonin GroES.